Here is a 328-residue protein sequence, read N- to C-terminus: Phosphate acyltransferase (328 aa).

This sequence belongs to the PlsX family. Homodimer. Probably interacts with PlsY.

It localises to the cytoplasm. The catalysed reaction is a fatty acyl-[ACP] + phosphate = an acyl phosphate + holo-[ACP]. Its pathway is lipid metabolism; phospholipid metabolism. Its function is as follows. Catalyzes the reversible formation of acyl-phosphate (acyl-PO(4)) from acyl-[acyl-carrier-protein] (acyl-ACP). This enzyme utilizes acyl-ACP as fatty acyl donor, but not acyl-CoA. In Staphylococcus aureus (strain bovine RF122 / ET3-1), this protein is Phosphate acyltransferase.